The following is a 117-amino-acid chain: Large ribosomal subunit protein uL18 (117 aa).

The protein belongs to the universal ribosomal protein uL18 family. As to quaternary structure, part of the 50S ribosomal subunit; part of the 5S rRNA/L5/L18/L25 subcomplex. Contacts the 5S and 23S rRNAs.

Its function is as follows. This is one of the proteins that bind and probably mediate the attachment of the 5S RNA into the large ribosomal subunit, where it forms part of the central protuberance. This chain is Large ribosomal subunit protein uL18, found in Mycoplasma mobile (strain ATCC 43663 / 163K / NCTC 11711) (Mesomycoplasma mobile).